A 59-amino-acid chain; its full sequence is Potassium channel toxin alpha-KTx 1.14 (59 aa).

A signal peptide spans 1 to 22 (MKKISFLLLLAIVICSIGWTDG). Gln-23 is subject to Pyrrolidone carboxylic acid. 3 disulfides stabilise this stretch: Cys-29–Cys-50, Cys-35–Cys-55, and Cys-39–Cys-57.

This sequence belongs to the short scorpion toxin superfamily. Potassium channel inhibitor family. Alpha-KTx 01 subfamily. Expressed by the venom gland.

Its subcellular location is the secreted. Functionally, potent blocker of both large-conductance calcium-activated potassium channels (KCa1.1/KCNMA1) and voltage-gated potassium channels (Kv1.3/KCNA3 and ERG1/Kv11.1/KCNH2). This is Potassium channel toxin alpha-KTx 1.14 from Olivierus martensii (Manchurian scorpion).